Consider the following 278-residue polypeptide: MNMPQLSTIQIGDHELAYLDNKLTSAVTPTIVMLPGWCGDHHSFSELIPQLNDTHRVVAVNWRGHAPVPHDVSDFGYAEQAQDALAILDAIGVDEFLPVSASHGGWALVQLLVDAGPARARAGVVLDWLMRRPTPEFTAALLSLQDPEGWVDSCRALFHTWRPNDSDWVESRVERAKEFGFDMWARSGRVISGAYGEHGTPLEFMKTITPERHIRHLFSTPSDSDYVAPQEAFASENEWFSYALLGGTSHFPHLEMPDRVAAHIVELAKNTYQAGAMR.

The AB hydrolase-1 domain occupies 29–158 (PTIVMLPGWC…GWVDSCRALF (130 aa)). Position 103 (His103) interacts with substrate. His250 (proton donor/acceptor) is an active-site residue.

It belongs to the AB hydrolase superfamily.

It catalyses the reaction 2-heptyl-3-hydroxy-4(1H)-quinolone + O2 = N-octanoylanthranilate + CO + H(+). Its function is as follows. Involved in the degradation of the Pseudomonas aeruginosa quorum sensing signal molecules HHQ (2-heptyl-4-quinolone) and PQS (2-heptyl-3-hydroxy-4-quinolone) to anthranilic acid. Catalyzes the cleavage of PQS to form N-octanoylanthranilic acid and carbon monoxide. The protein is 2-heptyl-3-hydroxy-4-quinolone dioxygenase AqdC1 of Rhodococcus erythropolis (Arthrobacter picolinophilus).